Consider the following 716-residue polypeptide: Fatty acid oxidation complex subunit alpha (716 aa).

The enoyl-CoA hydratase/isomerase stretch occupies residues M1 to A189. Position 296 (D296) interacts with substrate. Residues K311–A716 form a 3-hydroxyacyl-CoA dehydrogenase region. NAD(+) is bound by residues M324, D343, V400 to E402, K407, and S429. The active-site For 3-hydroxyacyl-CoA dehydrogenase activity is H450. Residue N453 coordinates NAD(+). The substrate site is built by N500 and Y660.

It in the N-terminal section; belongs to the enoyl-CoA hydratase/isomerase family. In the C-terminal section; belongs to the 3-hydroxyacyl-CoA dehydrogenase family. Heterotetramer of two alpha chains (FadB) and two beta chains (FadA).

It catalyses the reaction a (3S)-3-hydroxyacyl-CoA + NAD(+) = a 3-oxoacyl-CoA + NADH + H(+). The catalysed reaction is a (3S)-3-hydroxyacyl-CoA = a (2E)-enoyl-CoA + H2O. It carries out the reaction a 4-saturated-(3S)-3-hydroxyacyl-CoA = a (3E)-enoyl-CoA + H2O. The enzyme catalyses (3S)-3-hydroxybutanoyl-CoA = (3R)-3-hydroxybutanoyl-CoA. It catalyses the reaction a (3Z)-enoyl-CoA = a 4-saturated (2E)-enoyl-CoA. The catalysed reaction is a (3E)-enoyl-CoA = a 4-saturated (2E)-enoyl-CoA. It participates in lipid metabolism; fatty acid beta-oxidation. In terms of biological role, involved in the aerobic and anaerobic degradation of long-chain fatty acids via beta-oxidation cycle. Catalyzes the formation of 3-oxoacyl-CoA from enoyl-CoA via L-3-hydroxyacyl-CoA. It can also use D-3-hydroxyacyl-CoA and cis-3-enoyl-CoA as substrate. The polypeptide is Fatty acid oxidation complex subunit alpha (Shewanella oneidensis (strain ATCC 700550 / JCM 31522 / CIP 106686 / LMG 19005 / NCIMB 14063 / MR-1)).